Here is a 193-residue protein sequence, read N- to C-terminus: Large ribosomal subunit protein uL5 (193 aa).

The protein belongs to the universal ribosomal protein uL5 family. As to quaternary structure, part of the 50S ribosomal subunit; part of the 5S rRNA/L5/L18/L25 subcomplex. Contacts the 5S rRNA and the P site tRNA. Forms a bridge to the 30S subunit in the 70S ribosome.

In terms of biological role, this is one of the proteins that bind and probably mediate the attachment of the 5S RNA into the large ribosomal subunit, where it forms part of the central protuberance. In the 70S ribosome it contacts protein S13 of the 30S subunit (bridge B1b), connecting the 2 subunits; this bridge is implicated in subunit movement. Contacts the P site tRNA; the 5S rRNA and some of its associated proteins might help stabilize positioning of ribosome-bound tRNAs. This chain is Large ribosomal subunit protein uL5, found in Pseudarthrobacter chlorophenolicus (strain ATCC 700700 / DSM 12829 / CIP 107037 / JCM 12360 / KCTC 9906 / NCIMB 13794 / A6) (Arthrobacter chlorophenolicus).